Reading from the N-terminus, the 793-residue chain is Acetyl-CoA decarbonylase/synthase complex subunit alpha (793 aa).

[4Fe-4S] cluster is bound by residues C55, C58, C63, and C73. H96 serves as a coordination point for CO. [Ni-4Fe-4S] cluster is bound by residues H229, C257, and C309. 4Fe-4S ferredoxin-type domains lie at 393–422 and 432–461; these read EQQFKDTLATCTECNQCAFVCPPHIRISEM and EPFSSTYEVCVGCQRCEQTCPQEIPILKLY. [4Fe-4S] cluster is bound by residues C403, C406, C409, C413, C441, C444, C447, and C451. Positions 509, 538, and 573 each coordinate [Ni-4Fe-4S] cluster.

It belongs to the Ni-containing carbon monoxide dehydrogenase family. Heterotetramer of two alpha and two epsilon subunits. The ACDS complex is made up of alpha, epsilon, beta, gamma and delta subunits with a probable stoichiometry of (alpha(2)epsilon(2))(4)-beta(8)-(gamma(1)delta(1))(8). The cofactor is [4Fe-4S] cluster. [Ni-4Fe-4S] cluster serves as cofactor.

The catalysed reaction is CO + 2 oxidized [2Fe-2S]-[ferredoxin] + H2O = 2 reduced [2Fe-2S]-[ferredoxin] + CO2 + 2 H(+). Its function is as follows. Part of the ACDS complex that catalyzes the reversible cleavage of acetyl-CoA, allowing autotrophic growth from CO(2). The alpha-epsilon subcomponent functions as a carbon monoxide dehydrogenase. This chain is Acetyl-CoA decarbonylase/synthase complex subunit alpha, found in Methanothrix soehngenii (Methanosaeta concilii).